A 598-amino-acid chain; its full sequence is Replication protein E1 (598 aa).

Positions 76-78 (KRK) match the Nuclear localization signal motif. 2 positions are modified to phosphoserine; by host: Ser82 and Ser91. The Nuclear export signal signature appears at 90-99 (LSPQLQAVKI). The interval 138–302 (SQDGGGDINL…LVSHQAATTA (165 aa)) is DNA-binding region. One can recognise an SF3 helicase domain in the interval 401 to 551 (VNILSFLIVL…MPFLDDGSPM (151 aa)). 427 to 434 (GPPDTGKS) is an ATP binding site. A Glycyl lysine isopeptide (Lys-Gly) (interchain with G-Cter in SUMO) cross-link involves residue Lys508. A disordered region spans residues 573 to 598 (TDPEEESNGVPSRAFRCTSRSNSDSY).

The protein belongs to the papillomaviridae E1 protein family. Can form hexamers. Interacts with E2 protein; this interaction increases E1 DNA binding specificity. Interacts with host DNA polymerase subunit POLA2. Interacts with host single stranded DNA-binding protein RPA1. Interacts with host TOP1; this interaction stimulates the enzymatic activity of TOP1. Post-translationally, phosphorylated. In terms of processing, sumoylated.

It localises to the host nucleus. The catalysed reaction is Couples ATP hydrolysis with the unwinding of duplex DNA by translocating in the 3'-5' direction.. The enzyme catalyses ATP + H2O = ADP + phosphate + H(+). In terms of biological role, ATP-dependent DNA 3'-5' helicase required for initiation of viral DNA replication. It forms a complex with the viral E2 protein. The E1-E2 complex binds to the replication origin which contains binding sites for both proteins. During the initial step, a dimer of E1 interacts with a dimer of protein E2 leading to a complex that binds the viral origin of replication with high specificity. Then, a second dimer of E1 displaces the E2 dimer in an ATP-dependent manner to form the E1 tetramer. Following this, two E1 monomers are added to each half of the site, which results in the formation of two E1 trimers on the viral ori. Subsequently, two hexamers will be created. The double hexamer acts as a bi-directional helicase machinery and unwinds the viral DNA and then recruits the host DNA polymerase to start replication. The sequence is that of Replication protein E1 from Human papillomavirus 65.